The primary structure comprises 552 residues: Carboxypeptidase Y homolog A (552 aa).

The N-terminal stretch at 1-17 is a signal peptide; the sequence is MRVLPATLLVGAATAAT. Positions 18–133 are excised as a propeptide; that stretch reads PAQQVLGGLQ…KLEAYDLRIK (116 aa). 5 cysteine pairs are disulfide-bonded: Cys188/Cys428, Cys322/Cys336, Cys346/Cys369, Cys353/Cys362, and Cys391/Cys398. N-linked (GlcNAc...) asparagine glycosylation occurs at Asn219. Ser275 is a catalytic residue. Asp467 is a catalytic residue. Asn518 carries an N-linked (GlcNAc...) asparagine glycan. His529 is an active-site residue.

The protein belongs to the peptidase S10 family.

It is found in the vacuole. It carries out the reaction Release of a C-terminal amino acid with broad specificity.. Its function is as follows. Vacuolar carboxypeptidase involved in degradation of small peptides. Digests preferentially peptides containing an aliphatic or hydrophobic residue in P1' position, as well as methionine, leucine or phenylalanine in P1 position of ester substrate. The polypeptide is Carboxypeptidase Y homolog A (cpyA) (Emericella nidulans (strain FGSC A4 / ATCC 38163 / CBS 112.46 / NRRL 194 / M139) (Aspergillus nidulans)).